The sequence spans 410 residues: Transposase for insertion sequence element IS801 (410 aa).

This sequence belongs to the transposase 32 family.

Its function is as follows. Involved in the transposition of the insertion sequence. The polypeptide is Transposase for insertion sequence element IS801 (Pseudomonas savastanoi pv. phaseolicola (Pseudomonas syringae pv. phaseolicola)).